Here is a 245-residue protein sequence, read N- to C-terminus: Ribonuclease 3 (245 aa).

Positions 19 to 148 constitute an RNase III domain; that stretch reads FKVFQEKIGI…FIGALYLDQG (130 aa). Glu61 contributes to the Mg(2+) binding site. Residue Asp65 is part of the active site. Asp134 and Glu137 together coordinate Mg(2+). Glu137 is an active-site residue. The 70-residue stretch at 174-243 folds into the DRBM domain; that stretch reads DYKSQLQELI…AAEALKKLKE (70 aa).

Belongs to the ribonuclease III family. Homodimer. Mg(2+) serves as cofactor.

It localises to the cytoplasm. The enzyme catalyses Endonucleolytic cleavage to 5'-phosphomonoester.. Functionally, digests double-stranded RNA. Involved in the processing of primary rRNA transcript to yield the immediate precursors to the large and small rRNAs (23S and 16S). Processes some mRNAs, and tRNAs when they are encoded in the rRNA operon. Processes pre-crRNA and tracrRNA of type II CRISPR loci if present in the organism. The polypeptide is Ribonuclease 3 (Bacillus cereus (strain ZK / E33L)).